The chain runs to 171 residues: Iron-sulfur cluster assembly protein 1 (171 aa).

Residues 1–55 constitute a mitochondrion transit peptide; it reads MLRAGGRRLLAPGLRRVLGGGAAAPVAVGGAKAYHERVVDHYENPRNVGSFENDD.

The protein belongs to the NifU family. In terms of assembly, component of the core Fe-S cluster (ISC) assembly machinery. The cofactor is [2Fe-2S] cluster.

The protein localises to the mitochondrion matrix. The protein operates within cofactor biosynthesis; iron-sulfur cluster biosynthesis. Scaffold protein for the de novo synthesis of iron-sulfur (Fe-S) clusters within mitochondria, which is required for maturation of both mitochondrial and cytoplasmic [2Fe-2S] and [4Fe-4S] proteins. First, a [2Fe-2S] cluster is transiently assembled on the scaffold protein ISCU (ISU1, ISU2 or ISU3). In a second step, the cluster is released from ISCU, transferred to a glutaredoxin, followed by the formation of mitochondrial [2Fe-2S] proteins, the synthesis of [4Fe-4S] clusters and their target-specific insertion into the recipient apoproteins. Cluster assembly on ISCU depends on the function of the cysteine desulfurase complex NFS1-ISD11, which serves as the sulfur donor for cluster synthesis, the iron-binding protein frataxin as the putative iron donor, and the electron transfer chain comprised of ferredoxin reductase and ferredoxin, which receive their electrons from NADH. This is Iron-sulfur cluster assembly protein 1 from Oryza sativa subsp. japonica (Rice).